We begin with the raw amino-acid sequence, 800 residues long: Phenylalanine--tRNA ligase beta subunit (800 aa).

One can recognise a tRNA-binding domain in the interval 39–154 (SKDIKNLVVG…TEVEPGTDAL (116 aa)). Residues 408-483 (SFVTPIDITA…RIYGYDEIPS (76 aa)) form the B5 domain. Residues Asp-461, Asp-467, Glu-470, and Glu-471 each contribute to the Mg(2+) site. The region spanning 708 to 800 (PKFPGVTRDI…ALQAQGATIR (93 aa)) is the FDX-ACB domain.

Belongs to the phenylalanyl-tRNA synthetase beta subunit family. Type 1 subfamily. Tetramer of two alpha and two beta subunits. The cofactor is Mg(2+).

Its subcellular location is the cytoplasm. The enzyme catalyses tRNA(Phe) + L-phenylalanine + ATP = L-phenylalanyl-tRNA(Phe) + AMP + diphosphate + H(+). This is Phenylalanine--tRNA ligase beta subunit from Staphylococcus haemolyticus (strain JCSC1435).